Here is a 1576-residue protein sequence, read N- to C-terminus: Protein Shroom (1576 aa).

7 disordered regions span residues 1 to 31, 46 to 100, 112 to 142, 187 to 244, 267 to 434, 589 to 609, and 621 to 660; these read MKMR…ENNN, SNGA…TQAG, YDQT…DSTS, RQSH…SSTE, ISES…ISVT, VERQ…HSQS, and PNNL…SLLP. The segment covering 10–21 has biased composition (polar residues); sequence GNGSEMGESTKS. Low complexity-rich tracts occupy residues 46–69, 76–91, and 128–142; these read SNGA…AGSV, HNSS…GSSL, and SEGY…DSTS. Over residues 189 to 211 the composition is skewed to basic residues; sequence SHSHSHSHAHSHSNSHGHSHGHA. Composition is skewed to low complexity over residues 212 to 244 and 267 to 283; these read HSAS…SSTE and ISES…SSRV. Positions 305–317 are enriched in polar residues; it reads DSSPTASNSSQMM. A compositionally biased stretch (low complexity) spans 376 to 388; it reads QSTLSTQSSLLEL. Positions 399–415 are enriched in polar residues; the sequence is MGQSHSMGDLQQKNPHQ. The residue at position 404 (serine 404) is a Phosphoserine. Positions 445–920 are F-actin binding region required for planar polarity and cortical localization; the sequence is APQPPAGKPS…LESNQQKRSN (476 aa). Residues 633–643 are compositionally biased toward polar residues; it reads TGSNSASTRDC. Phosphoserine occurs at positions 667 and 668. 7 disordered regions span residues 699–728, 743–823, 849–876, 910–939, 1036–1055, 1091–1116, and 1210–1244; these read ISFN…SSAT, AALA…NCFA, VPKK…HHAT, NLES…NTDP, GYGK…SQSY, PTAT…SHSD, and SFAN…DVHD. Over residues 748 to 759 the composition is skewed to basic residues; it reads QQHHPQQHRHAQ. Over residues 798–816 the composition is skewed to pro residues; it reads PLPPPPPPEVLQPRPPPSP. 2 stretches are compositionally biased toward polar residues: residues 910-923 and 1042-1055; these read NLES…NSKA and KPVT…SQSY. 2 stretches are compositionally biased toward pro residues: residues 1094 to 1108 and 1217 to 1229; these read TPTP…PPRL and MTPP…PPPL. Over residues 1230-1239 the composition is skewed to acidic residues; it reads EPEEEEEQEE. Residues 1232 to 1296 are a coiled coil; it reads EEEEEQEEND…LEAAREEHQT (65 aa). The region spanning 1305-1572 is the ASD2 domain; the sequence is RQPIELDYEQ…QLSSLSDALV (268 aa).

The protein belongs to the shroom family. In terms of assembly, monomer or homodimer. Interacts with Rok. Binds (via N-terminus) to F-actin.

It localises to the cell junction. It is found in the adherens junction. The protein resides in the cytoplasm. Its subcellular location is the cytoskeleton. The protein localises to the apical cell membrane. Functionally, binds to Rho-kinase Rok and targets it to the apical cell cortex where it mediates apical constriction. During embryogenic axis elongation, required for the localization to adherens junctions and the establishment of planar polarization of both Rho-kinase Rok and myosin regulatory light chain sqh. May be involved in the assembly of microtubule arrays during cell elongation. The sequence is that of Protein Shroom from Drosophila melanogaster (Fruit fly).